We begin with the raw amino-acid sequence, 375 residues long: Chaperone protein DnaJ (375 aa).

In terms of domain architecture, J spans Asp5–Gly70. The segment at Gly131 to Gln209 adopts a CR-type zinc-finger fold. 8 residues coordinate Zn(2+): Cys144, Cys147, Cys161, Cys164, Cys183, Cys186, Cys197, and Cys200. 4 CXXCXGXG motif repeats span residues Cys144–Gly151, Cys161–Gly168, Cys183–Gly190, and Cys197–Gly204.

The protein belongs to the DnaJ family. As to quaternary structure, homodimer. Zn(2+) is required as a cofactor.

It localises to the cytoplasm. Its function is as follows. Participates actively in the response to hyperosmotic and heat shock by preventing the aggregation of stress-denatured proteins and by disaggregating proteins, also in an autonomous, DnaK-independent fashion. Unfolded proteins bind initially to DnaJ; upon interaction with the DnaJ-bound protein, DnaK hydrolyzes its bound ATP, resulting in the formation of a stable complex. GrpE releases ADP from DnaK; ATP binding to DnaK triggers the release of the substrate protein, thus completing the reaction cycle. Several rounds of ATP-dependent interactions between DnaJ, DnaK and GrpE are required for fully efficient folding. Also involved, together with DnaK and GrpE, in the DNA replication of plasmids through activation of initiation proteins. The polypeptide is Chaperone protein DnaJ (Hahella chejuensis (strain KCTC 2396)).